Reading from the N-terminus, the 415-residue chain is UV excision repair protein RAD23 homolog B (415 aa).

A Ubiquitin-like domain is found at 1-79 (MQVTLKTLQQ…VVVMVTKPKA (79 aa)). The disordered stretch occupies residues 80 to 175 (VTSAVPATTQ…STPGDSSRSN (96 aa)). Positions 84–143 (VPATTQQSSSPSTTTVSSSPAAAVAQAPAPTPALAPTSTPASTTPASTTASSEPAPTGAT) are enriched in low complexity. Phosphothreonine is present on threonine 155. Residues serine 160 and serine 174 each carry the phosphoserine modification. Residue threonine 186 is modified to Phosphothreonine. In terms of domain architecture, UBA 1 spans 188 to 228 (QSYENMVTEIMSMGYEREQVIAALRASFNNPDRAVEYLLMG). At serine 199 the chain carries Phosphoserine. Tyrosine 202 carries the phosphotyrosine modification. An STI1 domain is found at 274–317 (HPLEFLRNQPQFQQMRQIIQQNPSLLPALLQQIGRENPQLLQQI). A disordered region spans residues 334–355 (EAGGQGGGGGGGGGGGGGGGGI). Residues 336-355 (GGQGGGGGGGGGGGGGGGGI) show a composition bias toward gly residues. Residues 370 to 410 (PQEKEAIERLKALGFPEGLVIQAYFACEKNENLAANFLLQQ) enclose the UBA 2 domain.

This sequence belongs to the RAD23 family. In terms of assembly, component of the XPC complex composed of XPC, RAD23B and CETN2. Interacts with NGLY1 and PSMC1. Interacts with ATXN3. Interacts with AMFR. Interacts with VCP; the interaction is indirect and mediated by NGLY1.

It localises to the nucleus. The protein localises to the cytoplasm. Functionally, multiubiquitin chain receptor involved in modulation of proteasomal degradation. Binds to polyubiquitin chains. Proposed to be capable to bind simultaneously to the 26S proteasome and to polyubiquitinated substrates and to deliver ubiquitinated proteins to the proteasome. May play a role in endoplasmic reticulum-associated degradation (ERAD) of misfolded glycoproteins by association with PNGase and delivering deglycosylated proteins to the proteasome. In terms of biological role, involved in global genome nucleotide excision repair (GG-NER) by acting as component of the XPC complex. Cooperatively with Cetn2 appears to stabilize Xpc. May protect Xpc from proteasomal degradation. The XPC complex is proposed to represent the first factor bound at the sites of DNA damage and together with other core recognition factors, Xpa, RPA and the TFIIH complex, is part of the pre-incision (or initial recognition) complex. The XPC complex recognizes a wide spectrum of damaged DNA characterized by distortions of the DNA helix such as single-stranded loops, mismatched bubbles or single-stranded overhangs. The orientation of XPC complex binding appears to be crucial for inducing a productive NER. XPC complex is proposed to recognize and to interact with unpaired bases on the undamaged DNA strand which is followed by recruitment of the TFIIH complex and subsequent scanning for lesions in the opposite strand in a 5'-to-3' direction by the NER machinery. Cyclobutane pyrimidine dimers (CPDs) which are formed upon UV-induced DNA damage esacpe detection by the XPC complex due to a low degree of structural perurbation. Instead they are detected by the UV-DDB complex which in turn recruits and cooperates with the XPC complex in the respective DNA repair. In vitro, the XPC:RAD23B dimer is sufficient to initiate NER; it preferentially binds to cisplatin and UV-damaged double-stranded DNA and also binds to a variety of chemically and structurally diverse DNA adducts. XPC:RAD23B contacts DNA both 5' and 3' of a cisplatin lesion with a preference for the 5' side. Xpc:Rad22b induces a bend in DNA upon binding. Xpc:Rad23b stimulates the activity of DNA glycosylases Tdg and Smug1. The chain is UV excision repair protein RAD23 homolog B (Rad23b) from Rattus norvegicus (Rat).